An 826-amino-acid polypeptide reads, in one-letter code: Lysine-specific histone demethylase 1B (826 aa).

Positions 1 to 11 (MAASRGRSKKR) are enriched in basic residues. The segment at 1-46 (MAASRGRSKKRSNLELSPDNLPLRSSGRQAKKKAVEIPDEDEDGSS) is disordered. Phosphoserine is present on residues Ser-17 and Ser-26. 12 residues coordinate Zn(2+): Cys-53, Cys-58, Cys-65, Cys-73, His-84, His-90, Cys-92, Cys-95, Cys-142, Cys-147, Cys-169, and Cys-185. The CW-type zinc finger occupies 133–193 (DQQLPYWVQC…HCSFPEDLRV (61 aa)). Position 253 is a phosphoserine (Ser-253). Residues 279–298 (YQPNECGKALCVRPDVMELD) are GLYR1-binding. The region spanning 281 to 379 (PNECGKALCV…TGVLTVAAGQ (99 aa)) is the SWIRM domain. 389–445 (KSVLVVGAGPAGLAAARQLHNFGMKVTVLEAKDRIGGRVWDDKSFKGVVVGRGPQIV) contacts FAD. 3 histone H3-binding regions span residues 444–473 (IVNG…RCDL), 493–504 (FNALLDVVSEWR), and 544–578 (FHLS…AGDH). A GLYR1-binding region spans residues 570–572 (FFA). Residues Val-604, Glu-799, and 807–809 (QTV) each bind FAD. Positions 802–818 (NRHFPQTVTGAYLSGVR) are GLYR1-binding.

This sequence belongs to the flavin monoamine oxidase family. Interacts with its cofactor GLYR1 at nucleosomes; this interaction stimulates H3K4me1 and H3K4me2 demethylation. In contrast to KDM1A, does not form a complex with RCOR1/CoREST. Possible accessory component of the polycomb repressive deubiquitinase (PR-DUB) complex, at least composed of BAP1, one of ASXL1, ASXL2 or (probably) ASXL3 and one of MBD5 or MBD6. The PR-DUB core associates with a number of accessory proteins, including FOXK1, FOXK2, KDM1B, HCFC1 and OGT; KDM1B specifically associates with ASXL2 PR-DUB complexes. Requires FAD as cofactor. Zn(2+) serves as cofactor. In terms of tissue distribution, expressed in growing oocytes and in intestinal gland.

The protein localises to the nucleus. The protein resides in the chromosome. It carries out the reaction N(6),N(6)-dimethyl-L-lysyl(4)-[histone H3] + 2 A + 2 H2O = L-lysyl(4)-[histone H3] + 2 formaldehyde + 2 AH2. It catalyses the reaction N(6)-methyl-L-lysyl(4)-[histone H3] + A + H2O = L-lysyl(4)-[histone H3] + formaldehyde + AH2. Its activity is regulated as follows. Inhibited by tranylcypromine, but not by pargyline, deprenyl or rasagiline. Histone H3K4me1 and H3K4me2 demethylase activity is inhibited by DNA, this inhibition is released in complex with GLYR1. Histone demethylase that demethylates 'Lys-4' of histone H3, a specific tag for epigenetic transcriptional activation, thereby acting as a corepressor. Required for de novo DNA methylation of a subset of imprinted genes during oogenesis. Acts by oxidizing the substrate by FAD to generate the corresponding imine that is subsequently hydrolyzed. Demethylates both mono- and di-methylated 'Lys-4' of histone H3. Has no effect on tri-methylated 'Lys-4', mono-, di- or tri-methylated 'Lys-9', mono-, di- or tri-methylated 'Lys-27', mono-, di- or tri-methylated 'Lys-36' of histone H3, or on mono-, di- or tri-methylated 'Lys-20' of histone H4. In terms of biological role, histone demethylase that demethylates 'Lys-4' of histone H3, a specific tag for epigenetic transcriptional activation, thereby acting as a corepressor. Required for de novo DNA methylation of a subset of imprinted genes during oogenesis. Acts by oxidizing the substrate by FAD to generate the corresponding imine that is subsequently hydrolyzed. Demethylates both mono- and di-methylated 'Lys-4' of histone H3. Has no effect on tri-methylated 'Lys-4', mono-, di- or tri-methylated 'Lys-9', mono-, di- or tri-methylated 'Lys-27', mono-, di- or tri-methylated 'Lys-36' of histone H3, or on mono-, di- or tri-methylated 'Lys-20' of histone H4. Alone, it is unable to demethylate H3K4me on nucleosomes and requires the presence of GLYR1 to achieve such activity, they form a multifunctional enzyme complex that modifies transcribed chromatin and facilitates Pol II transcription through nucleosomes. This is Lysine-specific histone demethylase 1B from Mus musculus (Mouse).